Consider the following 287-residue polypeptide: Shikimate dehydrogenase (NADP(+)) (287 aa).

Residues 20–22 (SRS) and Thr-67 contribute to the shikimate site. Lys-71 (proton acceptor) is an active-site residue. Glu-84 contacts NADP(+). Asn-93 and Asp-108 together coordinate shikimate. NADP(+)-binding positions include 132–136 (GAGGA), 156–161 (NRTAAR), and Met-226. Shikimate is bound at residue Tyr-228. Gly-250 contacts NADP(+).

This sequence belongs to the shikimate dehydrogenase family. In terms of assembly, homodimer.

It catalyses the reaction shikimate + NADP(+) = 3-dehydroshikimate + NADPH + H(+). Its pathway is metabolic intermediate biosynthesis; chorismate biosynthesis; chorismate from D-erythrose 4-phosphate and phosphoenolpyruvate: step 4/7. In terms of biological role, involved in the biosynthesis of the chorismate, which leads to the biosynthesis of aromatic amino acids. Catalyzes the reversible NADPH linked reduction of 3-dehydroshikimate (DHSA) to yield shikimate (SA). The sequence is that of Shikimate dehydrogenase (NADP(+)) from Bordetella parapertussis (strain 12822 / ATCC BAA-587 / NCTC 13253).